Here is a 639-residue protein sequence, read N- to C-terminus: ATP-dependent rRNA helicase spb4 (639 aa).

The short motif at 14–42 is the Q motif element; the sequence is WDAVTPPLSEWVLEAMSSMGFARMTPVQA. In terms of domain architecture, Helicase ATP-binding spans 45-249; the sequence is IPLFMAHKDV…RVGLRNPVKI (205 aa). Residue 58-65 coordinates ATP; the sequence is AVTGSGKT. The DEAD box signature appears at 197 to 200; sequence DEAD. In terms of domain architecture, Helicase C-terminal spans 283 to 437; sequence ALKNILSSVQ…SISFSDADAT (155 aa). 2 disordered regions span residues 531 to 601 and 620 to 639; these read RKEL…ETKE and AAKAETAKAGGEDEEFKGFD. Residues 561-624 are a coiled coil; it reads QNAENKNKKL…RFRQAAAKAE (64 aa). The span at 577-601 shows a compositional bias: basic and acidic residues; sequence KLKQEKTKWENMTEEERQKARETKE.

This sequence belongs to the DEAD box helicase family. DDX55/SPB4 subfamily. In terms of assembly, component of pre-60S ribosomal complexes.

Its subcellular location is the nucleus. The protein localises to the nucleolus. It catalyses the reaction ATP + H2O = ADP + phosphate + H(+). ATP-binding RNA helicase involved in the biogenesis of 60S ribosomal subunits. Binds 90S pre-ribosomal particles and dissociates from pre-60S ribosomal particles after processing of 27SB pre-rRNA. Required for the normal formation of 18S rRNA through the processing of pre-rRNAs at sites A0, A1 and A2, and the normal formation of 25S and 5.8S rRNAs through the processing of pre-rRNAs at sites C1 and C2. The chain is ATP-dependent rRNA helicase spb4 from Aspergillus clavatus (strain ATCC 1007 / CBS 513.65 / DSM 816 / NCTC 3887 / NRRL 1 / QM 1276 / 107).